A 103-amino-acid polypeptide reads, in one-letter code: Toluene-4-monooxygenase system, effector component (103 aa).

It belongs to the TmoD/XamoD family. As to quaternary structure, the alkene monooxygenase multicomponent enzyme system is composed of an electron transfer component and a monooxygenase component interacting with the effector protein TmoD. The electron transfer component is composed of a ferredoxin reductase (TmoF) and a ferredoxin (TmoC), and the monooxygenase component is formed by a heterohexamer (dimer of heterotrimers) of two alpha subunits (TmoA), two beta subunits (TmoE) and two gamma subunits (TmoB).

It participates in xenobiotic degradation; toluene degradation. In terms of biological role, effector component of the toluene-4-monooxygenase multicomponent enzyme system which catalyzes the O2- and NADH-dependent hydroxylation of toluene to form p-cresol. Required for optimal efficiency and specificity of the holoenzyme. The protein is Toluene-4-monooxygenase system, effector component of Ectopseudomonas mendocina (Pseudomonas mendocina).